We begin with the raw amino-acid sequence, 229 residues long: Large ribosomal subunit protein uL1 (229 aa).

This sequence belongs to the universal ribosomal protein uL1 family. Part of the 50S ribosomal subunit.

Functionally, binds directly to 23S rRNA. The L1 stalk is quite mobile in the ribosome, and is involved in E site tRNA release. Protein L1 is also a translational repressor protein, it controls the translation of the L11 operon by binding to its mRNA. The protein is Large ribosomal subunit protein uL1 of Clostridium acetobutylicum (strain ATCC 824 / DSM 792 / JCM 1419 / IAM 19013 / LMG 5710 / NBRC 13948 / NRRL B-527 / VKM B-1787 / 2291 / W).